The following is a 234-amino-acid chain: Large ribosomal subunit protein uL1 (234 aa).

This sequence belongs to the universal ribosomal protein uL1 family. As to quaternary structure, part of the 50S ribosomal subunit.

Its function is as follows. Binds directly to 23S rRNA. The L1 stalk is quite mobile in the ribosome, and is involved in E site tRNA release. Functionally, protein L1 is also a translational repressor protein, it controls the translation of the L11 operon by binding to its mRNA. This chain is Large ribosomal subunit protein uL1, found in Serratia proteamaculans (strain 568).